The following is a 191-amino-acid chain: Glutathione-dependent formaldehyde-activating enzyme (191 aa).

Positions 22–169 (FQGGTLECHC…LTELGLPPYD (148 aa)) constitute a CENP-V/GFA domain. Residues cysteine 29, cysteine 31, cysteine 50, cysteine 52, cysteine 55, cysteine 97, and cysteine 100 each contribute to the Zn(2+) site.

The protein belongs to the Gfa family. Zn(2+) is required as a cofactor.

The enzyme catalyses S-(hydroxymethyl)glutathione = glutathione + formaldehyde. It functions in the pathway one-carbon metabolism; formaldehyde degradation; formate from formaldehyde (glutathione route): step 1/3. In terms of biological role, catalyzes the condensation of formaldehyde and glutathione to S-hydroxymethylglutathione. The polypeptide is Glutathione-dependent formaldehyde-activating enzyme (Xanthomonas axonopodis pv. citri (strain 306)).